The primary structure comprises 420 residues: Serine hydroxymethyltransferase (420 aa).

(6S)-5,6,7,8-tetrahydrofolate-binding positions include L118 and G122–L124. An N6-(pyridoxal phosphate)lysine modification is found at K227.

Belongs to the SHMT family. In terms of assembly, homodimer. Pyridoxal 5'-phosphate serves as cofactor.

Its subcellular location is the cytoplasm. It carries out the reaction (6R)-5,10-methylene-5,6,7,8-tetrahydrofolate + glycine + H2O = (6S)-5,6,7,8-tetrahydrofolate + L-serine. It participates in one-carbon metabolism; tetrahydrofolate interconversion. It functions in the pathway amino-acid biosynthesis; glycine biosynthesis; glycine from L-serine: step 1/1. Functionally, catalyzes the reversible interconversion of serine and glycine with tetrahydrofolate (THF) serving as the one-carbon carrier. This reaction serves as the major source of one-carbon groups required for the biosynthesis of purines, thymidylate, methionine, and other important biomolecules. Also exhibits THF-independent aldolase activity toward beta-hydroxyamino acids, producing glycine and aldehydes, via a retro-aldol mechanism. This Persephonella marina (strain DSM 14350 / EX-H1) protein is Serine hydroxymethyltransferase.